The following is a 430-amino-acid chain: Gamma-glutamyl phosphate reductase (430 aa).

It belongs to the gamma-glutamyl phosphate reductase family.

The protein localises to the cytoplasm. The catalysed reaction is L-glutamate 5-semialdehyde + phosphate + NADP(+) = L-glutamyl 5-phosphate + NADPH + H(+). Its pathway is amino-acid biosynthesis; L-proline biosynthesis; L-glutamate 5-semialdehyde from L-glutamate: step 2/2. Catalyzes the NADPH-dependent reduction of L-glutamate 5-phosphate into L-glutamate 5-semialdehyde and phosphate. The product spontaneously undergoes cyclization to form 1-pyrroline-5-carboxylate. The chain is Gamma-glutamyl phosphate reductase from Rhodopseudomonas palustris (strain BisB5).